A 252-amino-acid polypeptide reads, in one-letter code: MKQKKVKKAGLRKGGFTFKQFFVAHDKCEMKVGTDGVLLGAWAPITKAKTVLDIGTGSGLIALMLAQRAPQVERIDGIELDEDAALQASENAQQSQWSSLIHIYHHDIYQYAQQAPTRYDLIVSNPPYFEPAVACRNQEREQARYTKTLTHEGLLDSAQQLITDEGLFCVVLPYLIGEQFIEISQRKGWNVVQRVNIKDSADKPYHRILLAFQRQYQGETKPCNIEELIIRNNDGHYTTQFQSWVTDFYLYY.

The protein belongs to the methyltransferase superfamily. tRNA (adenine-N(6)-)-methyltransferase family.

The protein resides in the cytoplasm. The catalysed reaction is adenosine(37) in tRNA1(Val) + S-adenosyl-L-methionine = N(6)-methyladenosine(37) in tRNA1(Val) + S-adenosyl-L-homocysteine + H(+). Its function is as follows. Specifically methylates the adenine in position 37 of tRNA(1)(Val) (anticodon cmo5UAC). This is tRNA1(Val) (adenine(37)-N6)-methyltransferase from Proteus mirabilis (strain HI4320).